We begin with the raw amino-acid sequence, 82 residues long: Small ribosomal subunit protein bS16 (82 aa).

The protein belongs to the bacterial ribosomal protein bS16 family.

This chain is Small ribosomal subunit protein bS16, found in Saccharophagus degradans (strain 2-40 / ATCC 43961 / DSM 17024).